The following is a 359-amino-acid chain: Putative nucleotidyltransferase MAB21L1 (359 aa).

Residues 23-24 (RK) and 63-66 (YEGL) each bind a ribonucleoside 5'-triphosphate. Mg(2+)-binding residues include Glu73 and Glu75. A ribonucleoside 5'-triphosphate is bound by residues Lys248 and 252–255 (SILK).

This sequence belongs to the mab-21 family. In terms of assembly, monomer. Homodecamer; composed of 2 back to back homopentamers. The protein may exist as monomer in solution and oiligomerizes upon ligand binding.

The protein resides in the nucleus. Its function is as follows. Putative nucleotidyltransferase required for several aspects of embryonic development including normal development of the eye. It is unclear whether it displays nucleotidyltransferase activity in vivo. Binds single-stranded RNA (ssRNA). The protein is Putative nucleotidyltransferase MAB21L1 (MAB21L1) of Bos taurus (Bovine).